Reading from the N-terminus, the 402-residue chain is Non-homologous end joining protein Ku (402 aa).

In terms of domain architecture, Ku spans 12–185 (ISFGLVTIPV…VAALTGIAQP (174 aa)). The disordered stretch occupies residues 261-402 (QRAAGGATGG…GPDETAPGGP (142 aa)). 2 stretches are compositionally biased toward low complexity: residues 299-308 (GDPAASVPGV) and 332-343 (VPGVPATAVPGT). Positions 344–358 (PGAPVPTAPGVPSAP) are enriched in pro residues. Residues 359 to 376 (APGTSPTSVPGVQTAPNG) are compositionally biased toward low complexity.

Belongs to the prokaryotic Ku family. Homodimer. Interacts with LigD.

In terms of biological role, with LigD forms a non-homologous end joining (NHEJ) DNA repair enzyme, which repairs dsDNA breaks with reduced fidelity. Binds linear dsDNA with 5'- and 3'- overhangs but not closed circular dsDNA nor ssDNA. Recruits and stimulates the ligase activity of LigD. The polypeptide is Non-homologous end joining protein Ku (Symbiobacterium thermophilum (strain DSM 24528 / JCM 14929 / IAM 14863 / T)).